The primary structure comprises 109 residues: Ferredoxin CarAc (109 aa).

Positions 3–108 (AKVRVIFRAA…GLTLELPKAQ (106 aa)) constitute a 2Fe-2S ferredoxin-type domain. [2Fe-2S] cluster is bound by residues cysteine 43, cysteine 49, cysteine 52, and cysteine 89.

This sequence belongs to the adrenodoxin/putidaredoxin family. As to quaternary structure, monomer. Carbazole 1,9a-dioxygenase complex consists of a terminal oxygenase component CarAa, a ferredoxin reductase component fdr and a ferredoxin component CarAc. Requires [2Fe-2S] cluster as cofactor.

Part of the multicomponent carbazole 1,9a-dioxygenase (CARDO), that converts carbazole (CAR) into 2-aminobiphenyl-2,3-diol. Acts as a mediator in the electron transfer from fdr to CarAa. This Sphingomonas sp protein is Ferredoxin CarAc (carAc).